The primary structure comprises 625 residues: Probable potassium transport system protein Kup 2 (625 aa).

12 helical membrane-spanning segments follow: residues 10 to 30 (LAAL…TSPL), 47 to 67 (GVHL…VVTL), 104 to 124 (VLLL…VITP), 140 to 160 (PAFK…LFAV), 172 to 192 (FGPV…AEII), 214 to 234 (GWHM…VEAL), 250 to 270 (WLGL…ALLM), 283 to 303 (LFPQ…TVIA), 347 to 367 (WLLL…SALA), 369 to 389 (AYGI…FFVV), 396 to 416 (PLPV…LLVV), and 422 to 442 (FFQG…VMAT).

The protein belongs to the HAK/KUP transporter (TC 2.A.72) family.

It localises to the cell inner membrane. It catalyses the reaction K(+)(in) + H(+)(in) = K(+)(out) + H(+)(out). In terms of biological role, transport of potassium into the cell. Likely operates as a K(+):H(+) symporter. This is Probable potassium transport system protein Kup 2 from Albidiferax ferrireducens (strain ATCC BAA-621 / DSM 15236 / T118) (Rhodoferax ferrireducens).